The sequence spans 1126 residues: Protein translocase subunit SecA (1126 aa).

Residues Q175, G193–T197, and D694 each bind ATP. The segment at V1060 to L1126 is disordered. A compositionally biased stretch (basic and acidic residues) spans A1064 to D1080. Residues C1110, C1112, C1121, and H1122 each coordinate Zn(2+).

The protein belongs to the SecA family. As to quaternary structure, monomer and homodimer. Part of the essential Sec protein translocation apparatus which comprises SecA, SecYEG and auxiliary proteins SecDF. Other proteins may also be involved. Requires Zn(2+) as cofactor.

It is found in the cell inner membrane. Its subcellular location is the cytoplasm. The enzyme catalyses ATP + H2O + cellular proteinSide 1 = ADP + phosphate + cellular proteinSide 2.. Functionally, part of the Sec protein translocase complex. Interacts with the SecYEG preprotein conducting channel. Has a central role in coupling the hydrolysis of ATP to the transfer of proteins into and across the cell membrane, serving as an ATP-driven molecular motor driving the stepwise translocation of polypeptide chains across the membrane. The chain is Protein translocase subunit SecA from Parabacteroides distasonis (strain ATCC 8503 / DSM 20701 / CIP 104284 / JCM 5825 / NCTC 11152).